The following is a 278-amino-acid chain: Large ribosomal subunit protein uL2 (278 aa).

The tract at residues 201–278 (HGNINDGKAG…IMRSRHQRKK (78 aa)) is disordered. A compositionally biased stretch (basic residues) spans 210-221 (GRSRWRGKRPHV).

This sequence belongs to the universal ribosomal protein uL2 family. In terms of assembly, part of the 50S ribosomal subunit. Forms a bridge to the 30S subunit in the 70S ribosome.

Its function is as follows. One of the primary rRNA binding proteins. Required for association of the 30S and 50S subunits to form the 70S ribosome, for tRNA binding and peptide bond formation. It has been suggested to have peptidyltransferase activity; this is somewhat controversial. Makes several contacts with the 16S rRNA in the 70S ribosome. This is Large ribosomal subunit protein uL2 from Sinorhizobium fredii (strain NBRC 101917 / NGR234).